A 95-amino-acid chain; its full sequence is Co-chaperonin GroES (95 aa).

Belongs to the GroES chaperonin family. As to quaternary structure, heptamer of 7 subunits arranged in a ring. Interacts with the chaperonin GroEL.

It localises to the cytoplasm. Functionally, together with the chaperonin GroEL, plays an essential role in assisting protein folding. The GroEL-GroES system forms a nano-cage that allows encapsulation of the non-native substrate proteins and provides a physical environment optimized to promote and accelerate protein folding. GroES binds to the apical surface of the GroEL ring, thereby capping the opening of the GroEL channel. The polypeptide is Co-chaperonin GroES (Ruegeria sp. (strain TM1040) (Silicibacter sp.)).